A 72-amino-acid chain; its full sequence is Exodeoxyribonuclease 7 small subunit (72 aa).

Belongs to the XseB family. In terms of assembly, heterooligomer composed of large and small subunits.

The protein resides in the cytoplasm. The catalysed reaction is Exonucleolytic cleavage in either 5'- to 3'- or 3'- to 5'-direction to yield nucleoside 5'-phosphates.. Its function is as follows. Bidirectionally degrades single-stranded DNA into large acid-insoluble oligonucleotides, which are then degraded further into small acid-soluble oligonucleotides. The sequence is that of Exodeoxyribonuclease 7 small subunit from Chlamydia trachomatis serovar A (strain ATCC VR-571B / DSM 19440 / HAR-13).